Consider the following 493-residue polypeptide: Cysteine--tRNA ligase (493 aa).

Residue Cys41 coordinates Zn(2+). Positions 43–53 (PTVYNYPHIGN) match the 'HIGH' region motif. Cys231, His256, and Glu260 together coordinate Zn(2+). Positions 296-300 (KMSKS) match the 'KMSKS' region motif. Lys299 is a binding site for ATP.

Belongs to the class-I aminoacyl-tRNA synthetase family. Monomer. The cofactor is Zn(2+).

It localises to the cytoplasm. It catalyses the reaction tRNA(Cys) + L-cysteine + ATP = L-cysteinyl-tRNA(Cys) + AMP + diphosphate. This chain is Cysteine--tRNA ligase, found in Novosphingobium aromaticivorans (strain ATCC 700278 / DSM 12444 / CCUG 56034 / CIP 105152 / NBRC 16084 / F199).